The chain runs to 302 residues: Protein translocase subunit SecF (302 aa).

Helical transmembrane passes span 12–32 (FFIYLSIALILFSVIVIFVKG), 138–158 (YAWYAVIISLIVLLAYITIRF), 166–186 (AILALAHDVIITLGFYSLFGI), 190–210 (LTAIAAFLTLAGYSLNDTIVV), 249–269 (FLVVFMMFLLGGRSIASFAFG), and 272–292 (VGVIIGTYSSLYIASPIVIGM).

The protein belongs to the SecD/SecF family. SecF subfamily. As to quaternary structure, forms a complex with SecD. Part of the essential Sec protein translocation apparatus which comprises SecA, SecYEG and auxiliary proteins SecDF. Other proteins may also be involved.

It is found in the cell inner membrane. Its function is as follows. Part of the Sec protein translocase complex. Interacts with the SecYEG preprotein conducting channel. SecDF uses the proton motive force (PMF) to complete protein translocation after the ATP-dependent function of SecA. In Petrotoga mobilis (strain DSM 10674 / SJ95), this protein is Protein translocase subunit SecF.